The sequence spans 273 residues: Proteasome subunit beta type-10 (273 aa).

Methionine 1 carries the N-acetylmethionine modification. A propeptide spans 1-39 (removed in mature form); the sequence is MLKQAVEHRGGFSFENCQRNASLEHVLPGLRVPLARKTG. The Nucleophile role is filled by threonine 40. Serine 230 is subject to Phosphoserine.

Belongs to the peptidase T1B family. As to quaternary structure, the 26S proteasome consists of a 20S proteasome core and two 19S regulatory subunits. The 20S proteasome core is composed of 28 subunits that are arranged in four stacked rings, resulting in a barrel-shaped structure. The two end rings are each formed by seven alpha subunits, and the two central rings are each formed by seven beta subunits. The catalytic chamber with the active sites is on the inside of the barrel. Component of the immunoproteasome, where it displaces the equivalent housekeeping subunit PSMB7. Component of the spermatoproteasome, a form of the proteasome specifically found in testis. Post-translationally, autocleaved. The resulting N-terminal Thr residue of the mature subunit is responsible for the nucleophile proteolytic activity.

The protein localises to the cytoplasm. It is found in the nucleus. The catalysed reaction is Cleavage of peptide bonds with very broad specificity.. Functionally, the proteasome is a multicatalytic proteinase complex which is characterized by its ability to cleave peptides with Arg, Phe, Tyr, Leu, and Glu adjacent to the leaving group at neutral or slightly basic pH. The proteasome has an ATP-dependent proteolytic activity. This subunit is involved in antigen processing to generate class I binding peptides. The protein is Proteasome subunit beta type-10 (Psmb10) of Rattus norvegicus (Rat).